We begin with the raw amino-acid sequence, 88 residues long: Phosphocarrier protein HPr (88 aa).

The HPr domain occupies 2–88 (AQKTFKVTAD…ETMKSEGLGE (87 aa)). Phosphoserine is present on Ser-12. Residue His-15 is the Pros-phosphohistidine intermediate; alternate of the active site. At His-15 the chain carries Tele-phosphohistidine; alternate. Ser-46 carries the post-translational modification Phosphoserine; by HPrK/P.

It belongs to the HPr family. In terms of processing, phosphorylated during sporulation.

Its subcellular location is the cytoplasm. Phosphorylation on Ser-46 inhibits the phosphoryl transfer from enzyme I to HPr. General (non sugar-specific) component of the phosphoenolpyruvate-dependent sugar phosphotransferase system (sugar PTS). This major carbohydrate active-transport system catalyzes the phosphorylation of incoming sugar substrates concomitantly with their translocation across the cell membrane. The phosphoryl group from phosphoenolpyruvate (PEP) is transferred to the phosphoryl carrier protein HPr by enzyme I. Phospho-HPr then transfers it to the PTS EIIA domain. Functionally, P-Ser-HPr interacts with the catabolite control protein A (CcpA), forming a complex that binds to DNA at the catabolite response elements cre, operator sites preceding a large number of catabolite-regulated genes. Thus, P-Ser-HPr is a corepressor in carbon catabolite repression (CCR), a mechanism that allows bacteria to coordinate and optimize the utilization of available carbon sources. P-Ser-HPr also plays a role in inducer exclusion, in which it probably interacts with several non-PTS permeases and inhibits their transport activity. The polypeptide is Phosphocarrier protein HPr (ptsH) (Bacillus subtilis (strain 168)).